The primary structure comprises 134 residues: uncharacterized protein (134 aa).

The signal sequence occupies residues M1–S37.

This is an uncharacterized protein from Coxiella burnetii (strain RSA 493 / Nine Mile phase I).